Here is a 777-residue protein sequence, read N- to C-terminus: Endonuclease MutS2 (777 aa).

An ATP-binding site is contributed by 328–335 (GPNTGGKT). The Smr domain maps to 702 to 777 (LDLRGKRYEE…GSGATIVIFK (76 aa)).

This sequence belongs to the DNA mismatch repair MutS family. MutS2 subfamily. As to quaternary structure, homodimer. Binds to stalled ribosomes, contacting rRNA.

Endonuclease that is involved in the suppression of homologous recombination and thus may have a key role in the control of bacterial genetic diversity. Its function is as follows. Acts as a ribosome collision sensor, splitting the ribosome into its 2 subunits. Detects stalled/collided 70S ribosomes which it binds and splits by an ATP-hydrolysis driven conformational change. Acts upstream of the ribosome quality control system (RQC), a ribosome-associated complex that mediates the extraction of incompletely synthesized nascent chains from stalled ribosomes and their subsequent degradation. Probably generates substrates for RQC. In Streptococcus sanguinis (strain SK36), this protein is Endonuclease MutS2.